The chain runs to 270 residues: Urease accessory protein UreD (270 aa).

It belongs to the UreD family. UreD, UreF and UreG form a complex that acts as a GTP-hydrolysis-dependent molecular chaperone, activating the urease apoprotein by helping to assemble the nickel containing metallocenter of UreC. The UreE protein probably delivers the nickel.

It is found in the cytoplasm. Its function is as follows. Required for maturation of urease via the functional incorporation of the urease nickel metallocenter. The protein is Urease accessory protein UreD of Synechocystis sp. (strain ATCC 27184 / PCC 6803 / Kazusa).